We begin with the raw amino-acid sequence, 136 residues long: MPGVTVKDVNQQEFVRALAAFLKKSGKLKVPEWVDTVKLAXHKELAPYDENWFYTRAASTARHLYLRGGAGVGSMTKIYGGRQRNGVMPSHFSRGSKSVARRVLQALEGLKMVEKDQDGGRKLTPQGQRDLDRIAG.

Lysine 23 is subject to N6-acetyllysine. The residue at position 67 (arginine 67) is an Omega-N-methylarginine. 2 positions are modified to N6-acetyllysine: lysine 111 and lysine 115. The segment at 116–136 (DQDGGRKLTPQGQRDLDRIAG) is disordered.

This sequence belongs to the eukaryotic ribosomal protein eS19 family. In terms of assembly, component of the small ribosomal subunit. Part of the small subunit (SSU) processome, composed of more than 70 proteins and the RNA chaperone small nucleolar RNA (snoRNA) U3. Interacts with RPS19BP1; the interaction is direct and mediates the integration of RPS19 in state post-A1. Interacts with RPS19BP1.

Its subcellular location is the cytoplasm. It is found in the nucleus. The protein resides in the nucleolus. In terms of biological role, component of the small ribosomal subunit. The ribosome is a large ribonucleoprotein complex responsible for the synthesis of proteins in the cell. Required for pre-rRNA processing and maturation of 40S ribosomal subunits. Part of the small subunit (SSU) processome, first precursor of the small eukaryotic ribosomal subunit. During the assembly of the SSU processome in the nucleolus, many ribosome biogenesis factors, an RNA chaperone and ribosomal proteins associate with the nascent pre-rRNA and work in concert to generate RNA folding, modifications, rearrangements and cleavage as well as targeted degradation of pre-ribosomal RNA by the RNA exosome. This is Small ribosomal subunit protein eS19 (RPS19) from Sus scrofa (Pig).